Consider the following 512-residue polypeptide: Protein singed (512 aa).

Belongs to the fascin family. In terms of assembly, interacts with Rab35, with stronger binding to the Rab35-GTP form compared to the Rab35-GDP form.

It is found in the cytoplasm. Its subcellular location is the cytoskeleton. In terms of biological role, acts as an actin bundling protein. May have a role in the asymmetric organization and/or movement of cytoplasmic components. It has a role in somatic cells during the formation of adult bristles and hairs, and in the female germline during oogenesis. The chain is Protein singed (sn) from Drosophila melanogaster (Fruit fly).